The chain runs to 589 residues: ATP-dependent lipid A-core flippase (589 aa).

The next 5 membrane-spanning stretches (helical) occupy residues 29–49, 70–90, 157–177, 261–281, and 283–303; these read LLLVAALIAALIEAAGTTGFL, WLPVQIILLFVIRGAAGYITD, VIGALALMLWHSWQVTLTILV, MIGAIGLSALLFVAGAQALAG, and LTAGDFVVLMTSMLTIIPGLK. The region spanning 32 to 314 is the ABC transmembrane type-1 domain; sequence VAALIAALIE…LTNVQNMVQR (283 aa). The ABC transporter domain maps to 346–582; that stretch reads IEFRDVTARY…GGLYSHLHGM (237 aa). ATP is bound at residue 380–387; it reads GRSGSGKS.

Belongs to the ABC transporter superfamily. Lipid exporter (TC 3.A.1.106) family. In terms of assembly, homodimer.

Its subcellular location is the cell inner membrane. The enzyme catalyses ATP + H2O + lipid A-core oligosaccharideSide 1 = ADP + phosphate + lipid A-core oligosaccharideSide 2.. Functionally, involved in lipopolysaccharide (LPS) biosynthesis. Translocates lipid A-core from the inner to the outer leaflet of the inner membrane. Transmembrane domains (TMD) form a pore in the inner membrane and the ATP-binding domain (NBD) is responsible for energy generation. In Xanthomonas campestris pv. campestris (strain 8004), this protein is ATP-dependent lipid A-core flippase.